A 337-amino-acid chain; its full sequence is Inositol 2-dehydrogenase 1 (337 aa).

It belongs to the Gfo/Idh/MocA family. Homotetramer.

It carries out the reaction myo-inositol + NAD(+) = scyllo-inosose + NADH + H(+). Involved in the oxidation of myo-inositol (MI) to 2-keto-myo-inositol (2KMI or 2-inosose). The sequence is that of Inositol 2-dehydrogenase 1 from Paenarthrobacter aurescens (strain TC1).